Here is a 167-residue protein sequence, read N- to C-terminus: U-scoloptoxin-Er5c (167 aa).

The N-terminal stretch at 1 to 22 is a signal peptide; sequence MKTNCEFPLLCLLIVLVANVEG. Residues 23–94 constitute a propeptide that is removed on maturation; sequence EVEDTGLKMV…KRLWRNWERR (72 aa). 3 RLWRNWE repeats span residues 34–40, 61–67, and 86–92; these read RLWRNWE. Q95 bears the Pyrrolidone carboxylic acid mark. Residues 107–113 form an RLWRNWE 4; approximate repeat; the sequence is ELWRNWE. The propeptide occupies 112–118; that stretch reads WEDLKRR. Q119 is modified (pyrrolidone carboxylic acid). One copy of the RLWRNWE 5 repeat lies at 134-140; sequence RLWRNWE. Positions 139-167 are excised as a propeptide; it reads WEDNHATLRKRSADSLSRQKRLGRERGKE. The interval 147 to 167 is disordered; sequence RKRSADSLSRQKRLGRERGKE.

The protein belongs to the scoloptoxin-08 family. Expressed by the venom gland.

The protein resides in the secreted. The protein is U-scoloptoxin-Er5c of Ethmostigmus rubripes (Giant centipede).